The sequence spans 185 residues: MELQDKLLIAMPNLQDSYFSQSVIYICEHNEQGAMGLVLNQVTDLSIAELVAKLNFMMADGRHYPETYVFAGGPVSMDRGFILHTATERTFEHSYRVTDNLQLTTSEDVIETFGTPEAPEKYLVALGCATWTSGQLEKEIADNDWLVVPANNHILFDVPWAECWTAAQQLLGFQPANLVAEAGYC.

It belongs to the UPF0301 (AlgH) family.

The protein is UPF0301 protein MS0260 of Mannheimia succiniciproducens (strain KCTC 0769BP / MBEL55E).